Consider the following 202-residue polypeptide: Peptide methionine sulfoxide reductase A1 (202 aa).

Residues 1 to 20 (MNILNKLGIGSSRQTNMDPS) form a disordered region. S189 carries the phosphoserine modification.

Belongs to the MsrA Met sulfoxide reductase family.

The protein localises to the cytoplasm. Its subcellular location is the cytosol. It carries out the reaction L-methionyl-[protein] + [thioredoxin]-disulfide + H2O = L-methionyl-(S)-S-oxide-[protein] + [thioredoxin]-dithiol. It catalyses the reaction [thioredoxin]-disulfide + L-methionine + H2O = L-methionine (S)-S-oxide + [thioredoxin]-dithiol. In terms of biological role, catalyzes the reduction of methionine sulfoxide (MetSO) to methionine in proteins. Plays a protective role against oxidative stress by restoring activity to proteins that have been inactivated by methionine oxidation. MSRA family specifically reduces the MetSO S-enantiomer. This Arabidopsis thaliana (Mouse-ear cress) protein is Peptide methionine sulfoxide reductase A1 (MSRA1).